The chain runs to 231 residues: Large ribosomal subunit protein uL1 (231 aa).

Belongs to the universal ribosomal protein uL1 family. As to quaternary structure, part of the 50S ribosomal subunit.

Functionally, binds directly to 23S rRNA. The L1 stalk is quite mobile in the ribosome, and is involved in E site tRNA release. In terms of biological role, protein L1 is also a translational repressor protein, it controls the translation of the L11 operon by binding to its mRNA. This is Large ribosomal subunit protein uL1 from Beijerinckia indica subsp. indica (strain ATCC 9039 / DSM 1715 / NCIMB 8712).